A 629-amino-acid chain; its full sequence is Chaperone protein HtpG (629 aa).

The a; substrate-binding stretch occupies residues 1 to 337 (MAASKETMQF…SSDLPLNVSR (337 aa)). Residues 338–554 (EILQGNRVID…ERDMALYMQQ (217 aa)) are b. Residues 555-629 (LLKQAGHEIS…INQLMLALAG (75 aa)) form a c region.

Belongs to the heat shock protein 90 family. In terms of assembly, homodimer.

It is found in the cytoplasm. Molecular chaperone. Has ATPase activity. This is Chaperone protein HtpG from Acidithiobacillus ferrooxidans (strain ATCC 23270 / DSM 14882 / CIP 104768 / NCIMB 8455) (Ferrobacillus ferrooxidans (strain ATCC 23270)).